Consider the following 68-residue polypeptide: Cx9C motif-containing protein 4 (68 aa).

The CHCH domain occupies 4–46; the sequence is KDPCQKQACEIQKCLQANSYMESKCQAVIQELRKCCAQYPKGR. 2 consecutive short sequence motifs (cx9C motif) follow at residues 7 to 17 and 28 to 38; these read CQKQACEIQKC and CQAVIQELRKC. 3 cysteine pairs are disulfide-bonded: Cys-7-Cys-38, Cys-17-Cys-28, and Cys-39-Cys-50.

Belongs to the CMC4 family. In terms of tissue distribution, expressed in many tissues with a relatively high level in skeletal muscle.

It is found in the mitochondrion. This chain is Cx9C motif-containing protein 4 (CMC4), found in Homo sapiens (Human).